A 326-amino-acid chain; its full sequence is Methionine import ATP-binding protein MetN (326 aa).

The 226-residue stretch at 1–226 folds into the ABC transporter domain; that stretch reads MVFYTIGPQT…PQQPITRQFV (226 aa). 23–30 is a binding site for ATP; it reads GYSGAGKS.

This sequence belongs to the ABC transporter superfamily. Methionine importer (TC 3.A.1.24) family. The complex is composed of two ATP-binding proteins (MetN), two transmembrane proteins (MetI) and a solute-binding protein (MetQ).

Its subcellular location is the cell inner membrane. It catalyses the reaction L-methionine(out) + ATP + H2O = L-methionine(in) + ADP + phosphate + H(+). The catalysed reaction is D-methionine(out) + ATP + H2O = D-methionine(in) + ADP + phosphate + H(+). Functionally, part of the ABC transporter complex MetNIQ involved in methionine import. Responsible for energy coupling to the transport system. The chain is Methionine import ATP-binding protein MetN from Erwinia pyrifoliae (strain DSM 12162 / Ep1/96).